Here is a 214-residue protein sequence, read N- to C-terminus: Uridine kinase (214 aa).

An ATP-binding site is contributed by 15-22 (GASASGKS).

It belongs to the uridine kinase family.

Its subcellular location is the cytoplasm. It carries out the reaction uridine + ATP = UMP + ADP + H(+). It catalyses the reaction cytidine + ATP = CMP + ADP + H(+). It participates in pyrimidine metabolism; CTP biosynthesis via salvage pathway; CTP from cytidine: step 1/3. It functions in the pathway pyrimidine metabolism; UMP biosynthesis via salvage pathway; UMP from uridine: step 1/1. The polypeptide is Uridine kinase (Aeromonas hydrophila subsp. hydrophila (strain ATCC 7966 / DSM 30187 / BCRC 13018 / CCUG 14551 / JCM 1027 / KCTC 2358 / NCIMB 9240 / NCTC 8049)).